The sequence spans 232 residues: 5'-methylthioadenosine/S-adenosylhomocysteine nucleosidase (232 aa).

Residue glutamate 12 is the Proton acceptor of the active site. Substrate contacts are provided by residues glycine 78, isoleucine 152, and 173–174 (ME). Aspartate 197 functions as the Proton donor in the catalytic mechanism.

Belongs to the PNP/UDP phosphorylase family. MtnN subfamily. As to quaternary structure, homodimer.

The enzyme catalyses S-adenosyl-L-homocysteine + H2O = S-(5-deoxy-D-ribos-5-yl)-L-homocysteine + adenine. It catalyses the reaction S-methyl-5'-thioadenosine + H2O = 5-(methylsulfanyl)-D-ribose + adenine. It carries out the reaction 5'-deoxyadenosine + H2O = 5-deoxy-D-ribose + adenine. It functions in the pathway amino-acid biosynthesis; L-methionine biosynthesis via salvage pathway; S-methyl-5-thio-alpha-D-ribose 1-phosphate from S-methyl-5'-thioadenosine (hydrolase route): step 1/2. Catalyzes the irreversible cleavage of the glycosidic bond in both 5'-methylthioadenosine (MTA) and S-adenosylhomocysteine (SAH/AdoHcy) to adenine and the corresponding thioribose, 5'-methylthioribose and S-ribosylhomocysteine, respectively. Also cleaves 5'-deoxyadenosine, a toxic by-product of radical S-adenosylmethionine (SAM) enzymes, into 5-deoxyribose and adenine. Thus, is required for in vivo function of the radical SAM enzymes biotin synthase and lipoic acid synthase, that are inhibited by 5'-deoxyadenosine accumulation. This is 5'-methylthioadenosine/S-adenosylhomocysteine nucleosidase from Salmonella arizonae (strain ATCC BAA-731 / CDC346-86 / RSK2980).